The following is a 180-amino-acid chain: ADP-ribosylation factor 4 (180 aa).

G2 carries N-myristoyl glycine lipidation. GTP-binding positions include 24 to 31 (GLDAAGKT), 67 to 71 (DVGGQ), and 126 to 129 (NKQD). Residue S147 is modified to Phosphoserine.

The protein belongs to the small GTPase superfamily. Arf family. Forms a complex containing RAB11A, ASAP1, RAB3IP, RAP11FIP3 and ARF4; the complex promotes preciliary trafficking; the complex binds to RHO in photoreceptor cells and promotes RHO ciliary transport.

It is found in the golgi apparatus. Its subcellular location is the membrane. Functionally, GTP-binding protein that functions as an allosteric activator of the cholera toxin catalytic subunit, an ADP-ribosyltransferase. Involved in protein trafficking; may modulate vesicle budding and uncoating within the Golgi apparatus. Part of the ciliary targeting complex containing Rab11, ASAP1, Rabin8/RAB3IP, RAB11FIP3 and ARF4, which direct preciliary vesicle trafficking to mother centriole and ciliogenesis initiation. This is ADP-ribosylation factor 4 (ARF4) from Homo sapiens (Human).